Consider the following 538-residue polypeptide: UNC93-like protein (538 aa).

A glycan (N-linked (GlcNAc...) asparagine) is linked at asparagine 45. Helical transmembrane passes span 46–66, 80–100, 105–125, 128–148, and 170–190; these read ISII…TANL, SLSA…TLII, VKWT…FQLF, FYTL…MWAS, and AIIV…ELWG. Asparagine 210 is a glycosylation site (N-linked (GlcNAc...) asparagine). Transmembrane regions (helical) follow at residues 244-264, 305-325, 338-358, 366-386, 394-414, 435-455, and 457-477; these read IFEI…IIAF, LLIP…ADFT, IGFV…LFGS, TPII…ELFW, IIFY…QTQI, LWES…CTQM, and LYIL…VEIL.

It belongs to the unc-93 family.

The protein localises to the membrane. This is UNC93-like protein from Drosophila melanogaster (Fruit fly).